Consider the following 155-residue polypeptide: 3-dehydroquinate dehydratase 1 (155 aa).

The Proton acceptor role is filled by tyrosine 28. The substrate site is built by asparagine 80, histidine 86, and aspartate 93. Residue histidine 106 is the Proton donor of the active site. Residues 107–108 (VT) and arginine 117 each bind substrate.

Belongs to the type-II 3-dehydroquinase family. In terms of assembly, homododecamer.

It catalyses the reaction 3-dehydroquinate = 3-dehydroshikimate + H2O. It functions in the pathway metabolic intermediate biosynthesis; chorismate biosynthesis; chorismate from D-erythrose 4-phosphate and phosphoenolpyruvate: step 3/7. Catalyzes a trans-dehydration via an enolate intermediate. The sequence is that of 3-dehydroquinate dehydratase 1 (aroQ1) from Bradyrhizobium diazoefficiens (strain JCM 10833 / BCRC 13528 / IAM 13628 / NBRC 14792 / USDA 110).